The chain runs to 119 residues: Large ribosomal subunit protein bL17 (119 aa).

This sequence belongs to the bacterial ribosomal protein bL17 family. As to quaternary structure, part of the 50S ribosomal subunit. Contacts protein L32.

The chain is Large ribosomal subunit protein bL17 from Mesoplasma florum (strain ATCC 33453 / NBRC 100688 / NCTC 11704 / L1) (Acholeplasma florum).